Here is an 822-residue protein sequence, read N- to C-terminus: Nuclear factor of activated T-cells, cytoplasmic 1 (822 aa).

The tract at residues 110-115 is calcineurin-binding; the sequence is PRIEIT. The transactivation domain A (TAD-A) stretch occupies residues 118–210; the sequence is LGLHHNNGQF…CVSPKTTDPE (93 aa). The segment covering 192–206 has biased composition (polar residues); it reads PQTSPWQSPCVSPKT. Residues 192–289 are disordered; the sequence is PQTSPWQSPC…HSSPRVSVTD (98 aa). Tandem repeats lie at residues 195–211 and 225–241. The 3 X SP repeats stretch occupies residues 195–290; the sequence is SPWQSPCVSP…SSPRVSVTDD (96 aa). A phosphoserine mark is found at serine 225 and serine 229. A compositionally biased stretch (low complexity) spans 225 to 242; that stretch reads SPRHSPSTSPRTSVTEES. The residue at position 237 (serine 237) is a Phosphoserine; by PKA. A Nuclear localization signal motif is present at residues 257 to 259; it reads KRK. Residues 274–290 form repeat 3; the sequence is SPTPSPHSSPRVSVTDD. Serine 286 is modified (phosphoserine; by PKA). The Nuclear export signal motif lies at 302 to 313; that stretch reads SAIVAAINALST. The 183-residue stretch at 400–582 folds into the RHD domain; that stretch reads PSLPALDWQL…NPIECSQRSA (183 aa). Residues 429 to 436 mediate DNA binding; it reads RAHYETEG. The Nuclear localization signal motif lies at 672-674; it reads KRK. Residues 772–822 form a disordered region; that stretch reads GPGHLGLQRPAGGVLGGQEAPRPGGPHPGAPQLHPLNLSQSIVTRLTEPQP. Residues 808–822 are compositionally biased toward polar residues; it reads NLSQSIVTRLTEPQP.

In terms of assembly, member of the multicomponent NFATC transcription complex that consists of at least two components, a pre-existing cytoplasmic component NFATC2 and an inducible nuclear component NFATC1. Other members such as NFATC4, NFATC3 or members of the activating protein-1 family, MAF, GATA4 and Cbp/p300 can also bind the complex. NFATC proteins bind to DNA as monomers. Interacts with HOMER2 and HOMER3; this interaction may compete with calcineurin/PPP3CA-binding and hence prevent NFATC1 dephosphorylation and activation. Interacts with TLE6/GRG6. Phosphorylated by NFATC-kinase and GSK3B; phosphorylation induces NFATC1 nuclear exit and dephosphorylation by calcineurin promotes nuclear import. Phosphorylation by PKA and DYRK2 negatively modulates nuclear accumulation, and promotes subsequent phosphorylation by GSK3B or casein kinase 1.

The protein localises to the cytoplasm. It localises to the nucleus. In terms of biological role, plays a role in the inducible expression of cytokine genes in T-cells, especially in the induction of the IL-2 or IL-4 gene transcription. Also controls gene expression in embryonic cardiac cells. Could regulate not only the activation and proliferation but also the differentiation and programmed death of T-lymphocytes as well as lymphoid and non-lymphoid cells. Required for osteoclastogenesis and regulates many genes important for osteoclast differentiation and function. The polypeptide is Nuclear factor of activated T-cells, cytoplasmic 1 (NFATC1) (Sus scrofa (Pig)).